Here is a 971-residue protein sequence, read N- to C-terminus: UPF0182 protein RER_22310 (971 aa).

7 helical membrane-spanning segments follow: residues 16–36 (ILLV…RLIG), 61–81 (FVLF…AMLL), 112–132 (LFGV…AQAN), 172–192 (WLFV…YVFG), 209–229 (VQLA…YWFD), 257–277 (AKLI…ASIF), and 286–306 (MAVA…PMIV). A disordered region spans residues 890–927 (GSAATVTQPAPDPDTGAQPETPTTPTAPAPPASSDDVT).

This sequence belongs to the UPF0182 family.

It localises to the cell membrane. The sequence is that of UPF0182 protein RER_22310 from Rhodococcus erythropolis (strain PR4 / NBRC 100887).